Here is a 754-residue protein sequence, read N- to C-terminus: Pentatricopeptide repeat-containing protein At3g53700, chloroplastic (754 aa).

The transit peptide at 1–72 directs the protein to the chloroplast; sequence MAFSSCLKFY…DSAALRLFNL (72 aa). PPR repeat units follow at residues 82 to 116, 117 to 152, 153 to 187, 188 to 222, 223 to 257, 258 to 288, 294 to 328, 329 to 363, 364 to 398, 399 to 433, 434 to 468, 469 to 503, 504 to 538, 539 to 573, 574 to 608, 609 to 643, and 645 to 680; these read EPALYEEILLRLGRSGSFDDMKKILEDMKSSRCEM, GTSTFLILIESYAQFELQDEILSVVDWMIDEFGLKP, DTHFYNRMLNLLVDGNSLKLVEISHAKMSVWGIKP, DVSTFNVLIKALCRAHQLRPAILMLEDMPSYGLVP, DEKTFTTVMQGYIEEGDLDGALRIREQMVEFGCSW, SNVSVNVIVHGFCKEGRVEDALNFIQEMSNQ, DQYTFNTLVNGLCKAGHVKHAIEIMDVMLQEGYDP, DVYTYNSVISGLCKLGEVKEAVEVLDQMITRDCSP, NTVTYNTLISTLCKENQVEEATELARVLTSKGILP, DVCTFNSLIQGLCLTRNHRVAMELFEEMRSKGCEP, DEFTYNMLIDSLCSKGKLDEALNMLKQMELSGCAR, SVITYNTLIDGFCKANKTREAEEIFDEMEVHGVSR, NSVTYNTLIDGLCKSRRVEDAAQLMDQMIMEGQKP, DKYTYNSLLTHFCRGGDIKKAADIVQAMTSNGCEP, DIVTYGTLISGLCKAGRVEVASKLLRSIQMKGINL, TPHAYNPVIQGLFRKRKTTEAINLFREMLEQNEAP, and DAVSYRIVFRGLCNGGGPIREAVDFLVELLEKGFVP.

The protein belongs to the PPR family. P subfamily.

It localises to the plastid. Its subcellular location is the chloroplast. Its function is as follows. May be involved in female gametophyte development. In Arabidopsis thaliana (Mouse-ear cress), this protein is Pentatricopeptide repeat-containing protein At3g53700, chloroplastic (MEE40).